A 685-amino-acid polypeptide reads, in one-letter code: Probable serine/threonine-protein kinase CPE1738 (685 aa).

The Protein kinase domain maps to 10–275; the sequence is YELLQCVGEG…LEKIKKDPNV (266 aa). ATP contacts are provided by residues 16–24 and K39; that span reads VGEGGMSFV. Residue E143 is the Proton acceptor of the active site. The disordered stretch occupies residues 277–339; it reads ISSKSAEDED…NIQTKPQKAI (63 aa). Acidic residues predominate over residues 306–329; the sequence is EPDEDDEDDDEYYEDDEDEDEEEN. PASTA domains are found at residues 376–440, 441–508, 513–581, and 589–648; these read GKDV…TVSG, GEGQ…TISK, KSET…TINY, and EKPK…TMEE. The interval 480-500 is disordered; sequence VPRGEVISQSPNANESVDKGS. The disordered stretch occupies residues 623 to 685; that stretch reads DTAKVKSVSN…PKQPEQSGNN (63 aa). 2 stretches are compositionally biased toward low complexity: residues 627 to 645 and 654 to 685; these read VKSV…VSVT and QPTQ…SGNN.

This sequence belongs to the protein kinase superfamily. Ser/Thr protein kinase family.

The enzyme catalyses L-seryl-[protein] + ATP = O-phospho-L-seryl-[protein] + ADP + H(+). It catalyses the reaction L-threonyl-[protein] + ATP = O-phospho-L-threonyl-[protein] + ADP + H(+). This chain is Probable serine/threonine-protein kinase CPE1738, found in Clostridium perfringens (strain 13 / Type A).